The following is a 427-amino-acid chain: 3-phosphoshikimate 1-carboxyvinyltransferase (427 aa).

3-phosphoshikimate is bound by residues Lys20, Ser21, and Arg25. Lys20 contacts phosphoenolpyruvate. Phosphoenolpyruvate-binding residues include Gly92 and Arg120. Residues Ser166, Gln168, Asp312, and Lys339 each coordinate 3-phosphoshikimate. Phosphoenolpyruvate is bound at residue Gln168. The active-site Proton acceptor is the Asp312. Phosphoenolpyruvate is bound by residues Arg343 and Arg385.

This sequence belongs to the EPSP synthase family. Monomer.

The protein resides in the cytoplasm. The catalysed reaction is 3-phosphoshikimate + phosphoenolpyruvate = 5-O-(1-carboxyvinyl)-3-phosphoshikimate + phosphate. The protein operates within metabolic intermediate biosynthesis; chorismate biosynthesis; chorismate from D-erythrose 4-phosphate and phosphoenolpyruvate: step 6/7. Functionally, catalyzes the transfer of the enolpyruvyl moiety of phosphoenolpyruvate (PEP) to the 5-hydroxyl of shikimate-3-phosphate (S3P) to produce enolpyruvyl shikimate-3-phosphate and inorganic phosphate. This is 3-phosphoshikimate 1-carboxyvinyltransferase from Streptococcus pneumoniae serotype 19F (strain G54).